The chain runs to 157 residues: Transcriptional repressor NrdR (157 aa).

Residues 1–21 (MRCPYCSSEDSQVKDSRPAED) form a disordered region. The segment at 3–34 (CPYCSSEDSQVKDSRPAEDGNAIRRRRICPDC) is a zinc-finger region. Positions 11 to 21 (SQVKDSRPAED) are enriched in basic and acidic residues. Positions 49–139 (LMIIKKTGRK…VYRDFSHAED (91 aa)) constitute an ATP-cone domain.

This sequence belongs to the NrdR family. The cofactor is Zn(2+).

Negatively regulates transcription of bacterial ribonucleotide reductase nrd genes and operons by binding to NrdR-boxes. The protein is Transcriptional repressor NrdR of Sinorhizobium fredii (strain NBRC 101917 / NGR234).